The chain runs to 92 residues: uncharacterized protein (92 aa).

This is an uncharacterized protein from Escherichia coli (strain K12).